The sequence spans 710 residues: Protein phosphatase 1 regulatory subunit 37 (710 aa).

Pro residues predominate over residues 1 to 12; it reads MEIPPQEAPPGP. The tract at residues 1 to 46 is disordered; the sequence is MEIPPQEAPPGPGADADADAEAEEAPAEAGSSSGASPPTDGRLKAA. The segment covering 16 to 26 has biased composition (acidic residues); sequence ADADAEAEEAP. Over residues 27–38 the composition is skewed to low complexity; sequence AEAGSSSGASPP. 2 positions are modified to phosphoserine: serine 54 and serine 60. LRR repeat units follow at residues 224 to 244, 252 to 273, 281 to 301, 310 to 330, and 338 to 358; these read SLAVLHLENASLSGRPLMLLA, NLQELYLADNKLNGLQDSAQLG, SLQILDLRNNHVLDSGLAYIC, GLVTLVLWNNQLTHTGMAFLG, and SLETLNLGHNPIGNEGVRNLK. The segment at 487 to 677 is disordered; that stretch reads PLEESGDLPA…APPGLEAKGS (191 aa). Positions 512–531 are enriched in acidic residues; that stretch reads SDSDSDSDREEQEEEEEDQS. A compositionally biased stretch (low complexity) spans 543-565; it reads SSSAPCPALLPSTDSLGPGDKSP. The residue at position 581 (serine 581) is a Phosphoserine. Residues 603 to 624 show a composition bias toward pro residues; it reads PPVPPTSVSSPPPSPPSPPASP. Residues 637 to 649 are compositionally biased toward polar residues; sequence SEAQPQTEPSQAG. Positions 656–676 are enriched in low complexity; sequence LKPEFALALAPEAPPGLEAKG.

Belongs to the PPP1R37 family. In terms of assembly, interacts with PPP1CA.

Inhibits phosphatase activity of protein phosphatase 1 (PP1) complexes. This chain is Protein phosphatase 1 regulatory subunit 37 (Ppp1r37), found in Rattus norvegicus (Rat).